Here is a 425-residue protein sequence, read N- to C-terminus: SWI5-dependent HO expression protein 3 (425 aa).

The interval 24–45 (NLESSPTKDRNTSSQNASSSRV) is disordered. The span at 35–45 (TSSQNASSSRV) shows a compositional bias: polar residues. Residues 68-197 (QNLLSKLELA…LELSNQNLNY (130 aa)) are a coiled coil. A disordered region spans residues 322–425 (RKTPNTNDSS…NSMVVHGAQS (104 aa)). Residues 326–338 (NTNDSSSNGNSSN) are compositionally biased toward low complexity. Ser343 is modified (phosphoserine). Composition is skewed to polar residues over residues 345-358 (YTASPLLSSGSIPK) and 382-397 (KTNVTHNNDPSTSPTI). A Phosphoserine modification is found at Ser394.

This sequence belongs to the SHE3 family. As to quaternary structure, interacts with SHE2 and MYO4.

It localises to the endoplasmic reticulum membrane. Its function is as follows. RNA-binding protein that binds specific mRNAs including the ASH1 mRNA, coding for a repressor of the HO endonuclease. Part of the mRNA localization machinery that restricts accumulation of certain proteins to the bud and in the daughter cell. Required for the delivery of cortical endoplasmic reticulum into the emerging bud. The sequence is that of SWI5-dependent HO expression protein 3 (SHE3) from Saccharomyces cerevisiae (strain ATCC 204508 / S288c) (Baker's yeast).